A 90-amino-acid chain; its full sequence is UPF0297 protein ABC1593 (90 aa).

It belongs to the UPF0297 family.

The polypeptide is UPF0297 protein ABC1593 (Shouchella clausii (strain KSM-K16) (Alkalihalobacillus clausii)).